The sequence spans 730 residues: Polyphosphate kinase (730 aa).

A compositionally biased stretch (basic and acidic residues) spans 1–21 (MMRHDRNVTEIDAETRPDENL). The tract at residues 1-39 (MMRHDRNVTEIDAETRPDENLWHSGDSAVGAPPAATPAA) is disordered. ATP is bound at residue N86. Mg(2+)-binding residues include R423 and R453. H483 serves as the catalytic Phosphohistidine intermediate. The ATP site is built by Y516, R612, and H640.

It belongs to the polyphosphate kinase 1 (PPK1) family. Mg(2+) serves as cofactor. Post-translationally, an intermediate of this reaction is the autophosphorylated ppk in which a phosphate is covalently linked to a histidine residue through a N-P bond.

It catalyses the reaction [phosphate](n) + ATP = [phosphate](n+1) + ADP. Catalyzes the reversible transfer of the terminal phosphate of ATP to form a long-chain polyphosphate (polyP). The protein is Polyphosphate kinase of Mycobacterium avium (strain 104).